The sequence spans 75 residues: Cytochrome c oxidase subunit 6C (75 aa).

Residues 1-13 (MASSALAKPQMRG) lie on the Mitochondrial matrix side of the membrane. Residues 14-54 (LLARRLRIHIVGAFVVSLGVAAFYKYAVAEPRKKAYADFYR) traverse the membrane as a helical segment. The Mitochondrial intermembrane portion of the chain corresponds to 55–75 (NYDSVKYFEEMRKAGVFQSVK).

The protein belongs to the cytochrome c oxidase subunit 6c family. As to quaternary structure, component of the cytochrome c oxidase (complex IV, CIV), a multisubunit enzyme composed of 14 subunits. The complex is composed of a catalytic core of 3 subunits MT-CO1, MT-CO2 and MT-CO3, encoded in the mitochondrial DNA, and 11 supernumerary subunits COX4I, COX5A, COX5B, COX6A, COX6B, COX6C, COX7A, COX7B, COX7C, COX8 and NDUFA4, which are encoded in the nuclear genome. The complex exists as a monomer or a dimer and forms supercomplexes (SCs) in the inner mitochondrial membrane with NADH-ubiquinone oxidoreductase (complex I, CI) and ubiquinol-cytochrome c oxidoreductase (cytochrome b-c1 complex, complex III, CIII), resulting in different assemblies (supercomplex SCI(1)III(2)IV(1) and megacomplex MCI(2)III(2)IV(2)).

The protein localises to the mitochondrion inner membrane. It functions in the pathway energy metabolism; oxidative phosphorylation. In terms of biological role, component of the cytochrome c oxidase, the last enzyme in the mitochondrial electron transport chain which drives oxidative phosphorylation. The respiratory chain contains 3 multisubunit complexes succinate dehydrogenase (complex II, CII), ubiquinol-cytochrome c oxidoreductase (cytochrome b-c1 complex, complex III, CIII) and cytochrome c oxidase (complex IV, CIV), that cooperate to transfer electrons derived from NADH and succinate to molecular oxygen, creating an electrochemical gradient over the inner membrane that drives transmembrane transport and the ATP synthase. Cytochrome c oxidase is the component of the respiratory chain that catalyzes the reduction of oxygen to water. Electrons originating from reduced cytochrome c in the intermembrane space (IMS) are transferred via the dinuclear copper A center (CU(A)) of subunit 2 and heme A of subunit 1 to the active site in subunit 1, a binuclear center (BNC) formed by heme A3 and copper B (CU(B)). The BNC reduces molecular oxygen to 2 water molecules using 4 electrons from cytochrome c in the IMS and 4 protons from the mitochondrial matrix. This Nycticebus coucang (Slow loris) protein is Cytochrome c oxidase subunit 6C (COX6C).